The sequence spans 197 residues: UPF0462 protein C4orf33 homolog (197 aa).

It belongs to the UPF0462 family.

The sequence is that of UPF0462 protein C4orf33 homolog from Danio rerio (Zebrafish).